Consider the following 1247-residue polypeptide: SAM and SH3 domain-containing protein 1 (1247 aa).

The disordered stretch occupies residues 1-39 (MEDAGAAGPGPEPEPEPEPEPEPAPEPEPEPKPGAGTSE). Acidic residues predominate over residues 13–28 (PEPEPEPEPEPAPEPE). Position 90 is a phosphoserine (serine 90). 3 disordered regions span residues 126-145 (VERKNPLHKSNSEDSSVGKG), 221-257 (AALDPADWPDGSYPTFDGSSNCNSREQSDDETEESVK), and 316-344 (FFDGSPEKPPEDDSDSLTTSPSSSSLDTW). Phosphoserine is present on serine 248. A compositionally biased stretch (low complexity) spans 331–343 (SLTTSPSSSSLDT). Serine 407 bears the Phosphoserine mark. Residues 449 to 573 (SLGKKVKSVK…DFTPSPYDTD (125 aa)) are disordered. Low complexity-rich tracts occupy residues 468–484 (KYSSSVSEQDSGLDGMP) and 505–523 (GGSVESLRSSLSGQSSMSG). Polar residues predominate over residues 524–536 (QTVSTTDSSTSNR). An SH3 domain is found at 554–615 (PFCGRARVHT…KFIYVDVLSE (62 aa)). Position 614 is a phosphoserine (serine 614). 2 disordered regions span residues 616–639 (DEEKPKRPTRRRRKGRPPQPKSVE) and 713–810 (DSQG…LNKN). The span at 622–631 (RPTRRRRKGR) shows a compositional bias: basic residues. The 65-residue stretch at 633-697 (PQPKSVEDLL…LTAVELLQEY (65 aa)) folds into the SAM 1 domain. The segment covering 746-765 (SAKSSTEPSLKSFSRNQLGN) has biased composition (polar residues). Phosphoserine occurs at positions 821 and 839. 3 disordered regions span residues 846 to 884 (EPGAEQDVPTEVTEPPPQIVPEVPQKTTASSTKAQPLEQ), 903 to 946 (PQKL…LART), and 971 to 1065 (DAEQ…SELP). The tract at residues 852–860 (DVPTEVTEP) is required for interaction with TRAF6. Threonine 858 carries the phosphothreonine modification. A compositionally biased stretch (pro residues) spans 1050–1060 (GSPPSTRPPPW). Residues 1177-1241 (GCISSVSDWL…LSAARLFKLP (65 aa)) enclose the SAM 2 domain.

In terms of assembly, interacts with GNAS. Interacts with IQGAP1. Interacts with TRAF6 (via C-terminus); the interaction is LPS-dependent. Interacts with MAP3K7, CHUK and IKBKB. As to expression, expressed ubiquitously, with highest levels in lung, placenta, spleen and thymus. Down-regulated in the majority (74%) of breast tumors in comparison with corresponding normal breast epithelial tissues. Expressed in the epidermis, epidermal keratinocytes, dermal fibroblasts and melanocytes.

It is found in the cytoplasm. Functionally, is a positive regulator of NF-kappa-B signaling downstream of TLR4 activation. It acts as a scaffold molecule to assemble a molecular complex that includes TRAF6, MAP3K7, CHUK and IKBKB, thereby facilitating NF-kappa-B signaling activation. Regulates TRAF6 and MAP3K7 ubiquitination. Involved in the regulation of cell mobility. Regulates lipolysaccharide (LPS)-induced endothelial cell migration. Is involved in the regulation of skin pigmentation through the control of melanocyte migration in the epidermis. This Homo sapiens (Human) protein is SAM and SH3 domain-containing protein 1 (SASH1).